The primary structure comprises 359 residues: ATPase ASNA1 homolog (359 aa).

23–30 (KGGVGKTT) lines the ATP pocket. Aspartate 63 is an active-site residue. Glutamate 252 and asparagine 279 together coordinate ATP. The Zn(2+) site is built by cysteine 291 and cysteine 294.

The protein belongs to the arsA ATPase family. As to quaternary structure, homodimer.

Its subcellular location is the cytoplasm. It localises to the endoplasmic reticulum. Its function is as follows. ATPase required for the post-translational delivery of tail-anchored (TA) proteins to the endoplasmic reticulum. Recognizes and selectively binds the transmembrane domain of TA proteins in the cytosol. This complex then targets to the endoplasmic reticulum by membrane-bound receptors, where the tail-anchored protein is released for insertion. This process is regulated by ATP binding and hydrolysis. ATP binding drives the homodimer towards the closed dimer state, facilitating recognition of newly synthesized TA membrane proteins. ATP hydrolysis is required for insertion. Subsequently, the homodimer reverts towards the open dimer state, lowering its affinity for the membrane-bound receptor, and returning it to the cytosol to initiate a new round of targeting. This is ATPase ASNA1 homolog from Trypanosoma cruzi (strain CL Brener).